The primary structure comprises 775 residues: 1,4-alpha-glucan branching enzyme GlgB (775 aa).

The tract at residues 1–39 (MTSVHDFATATRPATPSAAAQEPAPALPPGLDRNTLDAL) is disordered. Residues 8–24 (ATATRPATPSAAAQEPA) show a composition bias toward low complexity. D454 acts as the Nucleophile in catalysis. E507 acts as the Proton donor in catalysis.

It belongs to the glycosyl hydrolase 13 family. GlgB subfamily. As to quaternary structure, monomer.

The catalysed reaction is Transfers a segment of a (1-&gt;4)-alpha-D-glucan chain to a primary hydroxy group in a similar glucan chain.. It participates in glycan biosynthesis; glycogen biosynthesis. Functionally, catalyzes the formation of the alpha-1,6-glucosidic linkages in glycogen by scission of a 1,4-alpha-linked oligosaccharide from growing alpha-1,4-glucan chains and the subsequent attachment of the oligosaccharide to the alpha-1,6 position. The polypeptide is 1,4-alpha-glucan branching enzyme GlgB (Ralstonia nicotianae (strain ATCC BAA-1114 / GMI1000) (Ralstonia solanacearum)).